A 316-amino-acid chain; its full sequence is Transaldolase (316 aa).

Lys131 acts as the Schiff-base intermediate with substrate in catalysis.

It belongs to the transaldolase family. Type 1 subfamily. Homodimer.

It localises to the cytoplasm. The enzyme catalyses D-sedoheptulose 7-phosphate + D-glyceraldehyde 3-phosphate = D-erythrose 4-phosphate + beta-D-fructose 6-phosphate. The protein operates within carbohydrate degradation; pentose phosphate pathway; D-glyceraldehyde 3-phosphate and beta-D-fructose 6-phosphate from D-ribose 5-phosphate and D-xylulose 5-phosphate (non-oxidative stage): step 2/3. Functionally, transaldolase is important for the balance of metabolites in the pentose-phosphate pathway. In Buchnera aphidicola subsp. Baizongia pistaciae (strain Bp), this protein is Transaldolase.